Here is a 63-residue protein sequence, read N- to C-terminus: Large ribosomal subunit protein bL32c (63 aa).

A disordered region spans residues 39–63; it reads SFSSGNEHPKPKGFSGQQTNNKIFE. The span at 53 to 63 shows a compositional bias: polar residues; it reads SGQQTNNKIFE.

The protein belongs to the bacterial ribosomal protein bL32 family.

It localises to the plastid. The protein resides in the chloroplast. This is Large ribosomal subunit protein bL32c from Triticum aestivum (Wheat).